The following is a 710-amino-acid chain: MASVISRAVRFHDDLEKEKLQEGEESHMEMRAYEMSSEYKHGKDAINKPSSNGRGLSRVFSEDYDAGEILVFDPRGPRINLWNKIFLAACLISLFVDPLFFYLPVAKKEKCIDMSIGLEVSLTIIRTFVDAFYIIHIYIRFQTAYIAPSSRVSGRGELIIDSSKIASNYMKKELWSDLVAALPLPQVLIWAVIPNIKGSEMIASRHVVRLVSIFQYLLRLYLIYPLSSKITKASGVMMEKAWAGAAYYLTLYMLASHVLGSTWYLLSIERQDECWKKACTLQYPHCQYHYLDCQSLSDPNRNAWLKSSNLSGLCDQNSHFFQFGIFDDAVTLEITSSNFLTKYYYCLWWGLRNLSSSGENLLTSTHVAEINFAVIVAILGLVLFALLIGNMQTYLQSTTIRLEEWRIRRTDTERWMHHRQLPHYLKENVRRHDQFRWVATRGVDEEAILRDLPVDLRRDIKRHLCLNLVRQVPLFDQMDDRMLDAICERLKPTLCTPGTCIVREGDPVDEMLFIVRGRLDSCTTNGGRTGFFNTCRIGSGDFCGEELLPWALDPRPTAVLPSSTRTVRAITEVEAFALIAEDLKFVAAQFRRLHSKQLRQTFRFYSHQWRTWAACFIQAAWFRYKRMKETNEVKEKENLMMMSNVKYYGNDDSQYFSAPLQVPKGSSYSMYSGKLVGSLRRGRSMRYGSELDMLGTLRKPIEPDFNDDGD.

6 helical membrane passes run 85-105, 115-135, 174-194, 207-226, 248-268, and 368-388; these read IFLA…YLPV, SIGL…FYII, LWSD…AVIP, VVRL…IYPL, YLTL…LLSI, and AEIN…ALLI. 474-559 lines the a nucleoside 3',5'-cyclic phosphate pocket; sequence LFDQMDDRML…WALDPRPTAV (86 aa).

This sequence belongs to the cyclic nucleotide-gated cation channel (TC 1.A.1.5) family. As to quaternary structure, interacts (via N-terminus) with DMI1 (via c-terminus). The Nod factor has no effect on this interaction, implying that the complex is maintained after activation. Expressed in roots, stems, leaves, flowers and pods.

It localises to the nucleus membrane. Cyclic nucleotide-gated channel involved in the establishment of both rhizobial and mycorrhizal associations. Required for full activation of nuclear-localized Ca(2+) oscillations by Nod and Myc factors. Simultaneous activation of the K(+)-permeable channel DMI1 and the Ca(2+) channel CNGC15 can give rise to sustained Ca(2+) oscillations. May function during fertilization in both female and male gametophytic Ca(2+) signaling. The chain is Protein CNGC15a from Medicago truncatula (Barrel medic).